The sequence spans 424 residues: Set1 complex component spp1 (424 aa).

Residues Q80–L108 form a disordered region. Residues A92–G102 show a composition bias toward basic residues. A PHD-type zinc finger spans residues P118–E168.

Component of the Set1 complex composed of ash2, sdc1, set1, shg1, spp1, swd1, swd2 and swd3.

It is found in the nucleus. Functionally, the Set1 complex specifically methylates 'Lys-4' of histone H3. This chain is Set1 complex component spp1 (spp1), found in Schizosaccharomyces pombe (strain 972 / ATCC 24843) (Fission yeast).